The primary structure comprises 230 residues: Increased recombination centers protein 19 (230 aa).

It belongs to the IRC19 family.

Its function is as follows. Involved in sporulation and maintenance of the mitochondrial DNA. Is probably involved in a pathway contributing to genomic integrity. The chain is Increased recombination centers protein 19 (IRC19) from Saccharomyces cerevisiae (strain JAY291) (Baker's yeast).